The following is a 429-amino-acid chain: Glycine betaine monooxygenase oxygenase subunit (429 aa).

Positions 56 to 163 (WLIAGMTCEI…VKTAGGYIFI (108 aa)) constitute a Rieske domain. Residues Cys-98, His-100, Cys-118, and His-121 each contribute to the [2Fe-2S] cluster site. Residues His-217 and His-222 each contribute to the Fe cation site.

It belongs to the bacterial ring-hydroxylating dioxygenase alpha subunit family. As to quaternary structure, the system is composed of an oxygenase subunit (GbcA) and a reductase subunit (GbcB). The cofactor is [2Fe-2S] cluster. It depends on Fe cation as a cofactor.

The catalysed reaction is glycine betaine + NADH + O2 + H(+) = N,N-dimethylglycine + formaldehyde + NAD(+) + H2O. Its function is as follows. Involved in degradation of glycine betaine. Part of a Rieske-type oxygenase system that catalyzes the conversion of glycine betaine (GB) to dimethylglycine (DMG). This subunit is the terminal oxygenase component of the system. Required for growth on choline and GB, but not for growth on DMG. The chain is Glycine betaine monooxygenase oxygenase subunit from Pseudomonas aeruginosa (strain ATCC 15692 / DSM 22644 / CIP 104116 / JCM 14847 / LMG 12228 / 1C / PRS 101 / PAO1).